The chain runs to 226 residues: GTP-binding nuclear protein Ran-3 (226 aa).

The region spanning 14–178 is the Small GTPase Ran-type domain; sequence GYPSFKLILV…LYLARKLTGD (165 aa). A GTP-binding site is contributed by 25–32; the sequence is DGGTGKTT. Residues 44–52 are switch-I; it reads KRYEPTIGV. GTP contacts are provided by residues G75, 129–132, and 157–159; these read NKVD and SAK. The interval 75–91 is switch-II; it reads GQEKFGGLRDGYYIHGH.

This sequence belongs to the small GTPase superfamily. Ran family. In terms of assembly, found in a nuclear export complex with RanGTP, exportin and pre-miRNA.

The protein localises to the nucleus. In terms of biological role, GTP-binding protein involved in nucleocytoplasmic transport. Required for the import of protein into the nucleus and also for RNA export. Involved in chromatin condensation and control of cell cycle. The protein is GTP-binding nuclear protein Ran-3 (RAN3) of Oryza sativa subsp. indica (Rice).